Here is a 427-residue protein sequence, read N- to C-terminus: Enolase (427 aa).

(2R)-2-phosphoglycerate is bound at residue glutamine 163. Catalysis depends on glutamate 205, which acts as the Proton donor. Aspartate 242, glutamate 285, and aspartate 312 together coordinate Mg(2+). (2R)-2-phosphoglycerate-binding residues include lysine 337, arginine 366, serine 367, and lysine 388. Residue lysine 337 is the Proton acceptor of the active site.

The protein belongs to the enolase family. The cofactor is Mg(2+).

The protein localises to the cytoplasm. Its subcellular location is the secreted. It is found in the cell surface. The catalysed reaction is (2R)-2-phosphoglycerate = phosphoenolpyruvate + H2O. It functions in the pathway carbohydrate degradation; glycolysis; pyruvate from D-glyceraldehyde 3-phosphate: step 4/5. Functionally, catalyzes the reversible conversion of 2-phosphoglycerate (2-PG) into phosphoenolpyruvate (PEP). It is essential for the degradation of carbohydrates via glycolysis. The polypeptide is Enolase (Rhodopseudomonas palustris (strain BisA53)).